The primary structure comprises 491 residues: UDP-N-acetylmuramate--L-alanine ligase (491 aa).

G126–T132 contributes to the ATP binding site.

The protein belongs to the MurCDEF family.

It is found in the cytoplasm. The enzyme catalyses UDP-N-acetyl-alpha-D-muramate + L-alanine + ATP = UDP-N-acetyl-alpha-D-muramoyl-L-alanine + ADP + phosphate + H(+). Its pathway is cell wall biogenesis; peptidoglycan biosynthesis. In terms of biological role, cell wall formation. The polypeptide is UDP-N-acetylmuramate--L-alanine ligase (Shigella sonnei (strain Ss046)).